The following is a 69-amino-acid chain: Calcium-binding protein (69 aa).

EF-hand domains lie at 2-37 and 38-69; these read VNRT…VNCP and FKKE…VLCS. Ca(2+) is bound by residues Asp15, Asp17, Ser19, Lys21, Glu26, Asp51, Asp53, Asp55, Gln57, and Glu62.

This is Calcium-binding protein from Schistosoma mansoni (Blood fluke).